We begin with the raw amino-acid sequence, 61 residues long: Small ribosomal subunit protein uS14B (61 aa).

Zn(2+) is bound by residues Cys24, Cys27, Cys40, and Cys43.

Belongs to the universal ribosomal protein uS14 family. Zinc-binding uS14 subfamily. In terms of assembly, part of the 30S ribosomal subunit. Contacts proteins S3 and S10. It depends on Zn(2+) as a cofactor.

Its function is as follows. Binds 16S rRNA, required for the assembly of 30S particles and may also be responsible for determining the conformation of the 16S rRNA at the A site. This chain is Small ribosomal subunit protein uS14B, found in Mycobacterium bovis (strain ATCC BAA-935 / AF2122/97).